The sequence spans 1282 residues: ATP-dependent helicase/nuclease subunit A (1282 aa).

The region spanning 10–481 (SKWTDSQRQV…IELQENFRSS (472 aa)) is the UvrD-like helicase ATP-binding domain. Position 31–38 (31–38 (AGAGAGKT)) interacts with ATP. Positions 516 to 820 (KPRELYLNED…RLMSIHKSKG (305 aa)) constitute a UvrD-like helicase C-terminal domain.

The protein belongs to the helicase family. AddA subfamily. Heterodimer of AddA and AddB/RexB. Mg(2+) serves as cofactor.

It carries out the reaction Couples ATP hydrolysis with the unwinding of duplex DNA by translocating in the 3'-5' direction.. The enzyme catalyses ATP + H2O = ADP + phosphate + H(+). Its function is as follows. The heterodimer acts as both an ATP-dependent DNA helicase and an ATP-dependent, dual-direction single-stranded exonuclease. Recognizes the chi site generating a DNA molecule suitable for the initiation of homologous recombination. The AddA nuclease domain is required for chi fragment generation; this subunit has the helicase and 3' -&gt; 5' nuclease activities. This chain is ATP-dependent helicase/nuclease subunit A, found in Natranaerobius thermophilus (strain ATCC BAA-1301 / DSM 18059 / JW/NM-WN-LF).